Consider the following 3856-residue polypeptide: Hybrid PKS-NRPS synthetase traA (3856 aa).

The Ketosynthase family 3 (KS3) domain maps to 6–438 (PEPIAIVGSG…GTNGHAILEE (433 aa)). Catalysis depends on for beta-ketoacyl synthase activity residues Cys179, His318, and His358. Residues 554–885 (IFTGQGAQWA…FSDALGFVWT (332 aa)) are malonyl-CoA:ACP transacylase (MAT) domain. The tract at residues 943-1081 (HELLGVPSPN…GKVTVIYGTP (139 aa)) is N-terminal hotdog fold. The dehydratase (DH) domain stretch occupies residues 943 to 1247 (HELLGVPSPN…LSMKPFSPAT (305 aa)). A PKS/mFAS DH domain is found at 943–1249 (HELLGVPSPN…MKPFSPATAD (307 aa)). Residue His975 is the Proton acceptor; for dehydratase activity of the active site. A C-terminal hotdog fold region spans residues 1096–1249 (MVDIQAEQFY…MKPFSPATAD (154 aa)). Residue Asp1156 is the Proton donor; for dehydratase activity of the active site. The interval 1290 to 1456 (LACVAQQIVH…RKAGFSGIDS (167 aa)) is methyltransferase (MT) domain. The ketoreductase (KR) domain stretch occupies residues 1984-2158 (TYVLVGLSGR…ATSLDIGSIV (175 aa)). A Carrier 1 domain is found at 2266–2347 (ADALEILKEL…TLCQQALEKL (82 aa)). Residue Ser2307 is modified to O-(pantetheine 4'-phosphoryl)serine. The interval 2351–2422 (ILPNVESGGP…SSTPATVLSN (72 aa)) is disordered. Composition is skewed to low complexity over residues 2357–2369 (SGGPSKTGSSKPT) and 2399–2418 (TTSPQSTLSSDQSPSSTPAT). Positions 2446–2884 (VKTELVSFQQ…FALFSDKELK (439 aa)) are condensation (C) domain. Residues 2910–3310 (QIAKENDDKV…GAMVFHNRIA (401 aa)) are adenylation (A) domain. Positions 3403–3429 (SKTDRKALKELPLPQRSNHDTGDNTES) are disordered. A Carrier 2 domain is found at 3428–3507 (ESLTETMLEL…DMTQKIEESL (80 aa)). An O-(pantetheine 4'-phosphoryl)serine modification is found at Ser3467. The tract at residues 3544 to 3768 (VTGSGGFLGK…EMTPIHSAAS (225 aa)) is reductase (R) domain.

This sequence in the C-terminal section; belongs to the NRP synthetase family.

It participates in secondary metabolite biosynthesis. Hybrid PKS-NRPS synthetase; part of the tra gene cluster that produces terrestric acid. The clavatol biosynthesis cluster cla and the terrestric acid cluster tra are both involved in the production of peniphenones and penilactones. The non-reducing PKS claF is responsible for the formation of clavatol from successive condensations of 3 malonyl-CoA units, presumably with a simple acetyl-CoA starter unit, and 2 methylation steps. The esterase claE probably collaborates with claF by catalyzing the hydrolysis of ACP-bound acyl intermediates to free the ACP from stalled intermediates. The clavatol oxidase claD then converts clavatol to hydroxyclavatol. Spontaneous dehydration of hydroxyclavatol leads to the accumulation of the highly active ortho-quinone methide. On the other hand, the PKS-NRPS hybrid traA is involved in the formation of crustosic acid, with the help of traB and traD. The polyketide synthase module (PKS) of traA is responsible for the synthesis of the polyketide backbone via the condensation of an acetyl-CoA starter unit with 3 malonyl-CoA units. The downstream nonribosomal peptide synthetase (NRPS) module then amidates the carboxyl end of the polyketide with L-malic acid. Because traA lacks a designated enoylreductase (ER) domain, the required activity is provided the enoyl reductase traG. Crustosic acid undergoes decarboxylation and isomerization to the terrestric acid, catalyzed by the 2-oxoglutarate-dependent dioxygenase traH. Both acids are further converted to the 2 gamma-butyrolactones (R)-5-methyltetronic acid and (S)-5-carboxylmethyltetronic acid, with involvement of the cytochrome P450 monooxygenase claJ. Spontaneous addition of the methide to these gamma-butyrolactones leads to peniphenone D and penilactone D, which undergo again stereospecific attacking by methide to give penilactones A and B. The sequence is that of Hybrid PKS-NRPS synthetase traA from Penicillium crustosum (Blue mold fungus).